The sequence spans 198 residues: GTP cyclohydrolase-2 (198 aa).

52 to 56 (RMHSE) contributes to the GTP binding site. Zn(2+) contacts are provided by Cys-57, Cys-68, and Cys-70. Residues Gln-73, 94 to 96 (EGR), and Thr-116 each bind GTP. Asp-128 functions as the Proton acceptor in the catalytic mechanism. The active-site Nucleophile is Arg-130. Residues Thr-151 and Lys-156 each contribute to the GTP site.

It belongs to the GTP cyclohydrolase II family. It depends on Zn(2+) as a cofactor.

It catalyses the reaction GTP + 4 H2O = 2,5-diamino-6-hydroxy-4-(5-phosphoribosylamino)-pyrimidine + formate + 2 phosphate + 3 H(+). It participates in cofactor biosynthesis; riboflavin biosynthesis; 5-amino-6-(D-ribitylamino)uracil from GTP: step 1/4. Its function is as follows. Catalyzes the conversion of GTP to 2,5-diamino-6-ribosylamino-4(3H)-pyrimidinone 5'-phosphate (DARP), formate and pyrophosphate. This Vibrio vulnificus (strain CMCP6) protein is GTP cyclohydrolase-2.